The primary structure comprises 279 residues: Eukaryotic translation initiation factor 3 subunit G (279 aa).

3 disordered regions span residues 1–26, 66–115, and 152–171; these read MSTG…IANP, RKNW…KAHE, and TPSG…AAGA. Position 78 is a phosphoserine (serine 78). Positions 102–115 are enriched in basic and acidic residues; that stretch reads KQDEKKEEEDKAHE. The span at 152-163 shows a compositional bias: low complexity; sequence TPSGTTPEPTSE. The RRM domain maps to 197-276; that stretch reads TTLKVSQLNS…LILHLEWSKK (80 aa).

This sequence belongs to the eIF-3 subunit G family. In terms of assembly, component of the eukaryotic translation initiation factor 3 (eIF-3) complex.

The protein localises to the cytoplasm. Functionally, RNA-binding component of the eukaryotic translation initiation factor 3 (eIF-3) complex, which is involved in protein synthesis of a specialized repertoire of mRNAs and, together with other initiation factors, stimulates binding of mRNA and methionyl-tRNAi to the 40S ribosome. The eIF-3 complex specifically targets and initiates translation of a subset of mRNAs involved in cell proliferation. This subunit can bind 18S rRNA. In Candida albicans (strain SC5314 / ATCC MYA-2876) (Yeast), this protein is Eukaryotic translation initiation factor 3 subunit G.